A 767-amino-acid polypeptide reads, in one-letter code: MTISPPESGEKDKKILESPVKADPRPIDFAKLDKPGFWSSKLSKGPKTTTWIWNLHADAHDFDIHTGDAEEATRKIFSAHFGHLAVIFIWMSAAFFHGARFSNYSGWLADPTHVKPGAQQVWAIVGQEMLNGDLGANYNGIQISSGVFHMWRAWGITNESELMALAIGAVVMAALMLHAGIFHYHKAAPKMEWFQNIESMLNHHIAGLVGLGSLAWAGHCIHIGAPTAALLDAIDAGTPLVINGKEIATIADMPMPHQLCDPQIIAQIFPGLASGTGNFFSLNWLAFSDFLTFKGGLNPVTGSLWMTDVSHHHLAFGVIAIIGGHMYRTNYGIGHSMKEILDSQQGDPILFPAPKGHQGLFEFMAESRHAQLSVNLAMLGSLSILISHHMYAMPPYPYIATDYMTVLGLFTHHMWIGGLFIVGAGAHAGIAMVRDYDPAKHIDNVLDRILKARDALISHLNWVCMWLGFHSFGLYIHNDTMRALGRPQDMFSDSAIQLQPIFAQWVQSIQASAVGTSILAGTAEALPHKAISEVFNGSLVEVGGKVAIAPIPLGTADLMIHHIHAFQIHVTVLILLKGVLYARSSRLIPDKASLGFRFPCDGPGRGGTCQVSSWDHVFLGLFWMYNCLSIVIFHFSWKMQSDVWGLTGGNFSQSAITINGWLRDFLWAQSSQVLTSYGSAISMYGLMFLGAHFIWAFSLMFLFSGRGYWQELFESIVWAHNKLKVAPTIQPRALSITQGRAVGVTHFLVGGIATTWAFFHARLFGLG.

Residues 1-22 (MTISPPESGEKDKKILESPVKA) are disordered. The span at 8–22 (SGEKDKKILESPVKA) shows a compositional bias: basic and acidic residues. 8 consecutive transmembrane segments (helical) span residues 76-99 (IFSAHFGHLAVIFIWMSAAFFHGA), 162-185 (LMALAIGAVVMAALMLHAGIFHYH), 201-225 (LNHHIAGLVGLGSLAWAGHCIHIGA), 309-327 (VSHHHLAFGVIAIIGGHMY), 368-391 (RHAQLSVNLAMLGSLSILISHHMY), 407-433 (LGLFTHHMWIGGLFIVGAGAHAGIAMV), 455-477 (ALISHLNWVCMWLGFHSFGLYIH), and 558-576 (LMIHHIHAFQIHVTVLILL). Residues C600 and C609 each contribute to the [4Fe-4S] cluster site. Helical transmembrane passes span 616–637 (HVFLGLFWMYNCLSIVIFHFSW) and 681–703 (ISMYGLMFLGAHFIWAFSLMFLF). H692 contacts divinylchlorophyll a'. M700 and Y708 together coordinate divinyl chlorophyll a. Residue W709 participates in phylloquinone binding. The chain crosses the membrane as a helical span at residues 741 to 761 (AVGVTHFLVGGIATTWAFFHA).

It belongs to the PsaA/PsaB family. The PsaA/B heterodimer binds the P700 divinyl chlorophyll special pair and subsequent electron acceptors. PSI consists of a core antenna complex that captures photons, and an electron transfer chain that converts photonic excitation into a charge separation. The cyanobacterial PSI reaction center is composed of one copy each of PsaA,B,C,D,E,F,I,J,K,L,M and X, and forms trimeric complexes. PSI electron transfer chain: 5 divinyl chlorophyll a, 1 divinyl chlorophyll a', 2 phylloquinones and 3 4Fe-4S clusters. PSI core antenna: 90 divinyl chlorophyll a, 22 carotenoids, 3 phospholipids and 1 galactolipid. P700 is a divinyl chlorophyll a/divinyl chlorophyll a' dimer, A0 is one or more divinyl chlorophyll a, A1 is one or both phylloquinones and FX is a shared 4Fe-4S iron-sulfur center. is required as a cofactor.

It localises to the cellular thylakoid membrane. The enzyme catalyses reduced [plastocyanin] + hnu + oxidized [2Fe-2S]-[ferredoxin] = oxidized [plastocyanin] + reduced [2Fe-2S]-[ferredoxin]. Functionally, psaA and PsaB bind P700, the primary electron donor of photosystem I (PSI), as well as the electron acceptors A0, A1 and FX. PSI is a plastocyanin/cytochrome c6-ferredoxin oxidoreductase, converting photonic excitation into a charge separation, which transfers an electron from the donor P700 chlorophyll pair to the spectroscopically characterized acceptors A0, A1, FX, FA and FB in turn. Oxidized P700 is reduced on the lumenal side of the thylakoid membrane by plastocyanin or cytochrome c6. This chain is Photosystem I P700 chlorophyll a apoprotein A1, found in Prochlorococcus marinus subsp. pastoris (strain CCMP1986 / NIES-2087 / MED4).